We begin with the raw amino-acid sequence, 347 residues long: UDP-3-O-acylglucosamine N-acyltransferase (347 aa).

The active-site Proton acceptor is the H241.

This sequence belongs to the transferase hexapeptide repeat family. LpxD subfamily. In terms of assembly, homotrimer.

The catalysed reaction is a UDP-3-O-[(3R)-3-hydroxyacyl]-alpha-D-glucosamine + a (3R)-hydroxyacyl-[ACP] = a UDP-2-N,3-O-bis[(3R)-3-hydroxyacyl]-alpha-D-glucosamine + holo-[ACP] + H(+). It functions in the pathway bacterial outer membrane biogenesis; LPS lipid A biosynthesis. In terms of biological role, catalyzes the N-acylation of UDP-3-O-acylglucosamine using 3-hydroxyacyl-ACP as the acyl donor. Is involved in the biosynthesis of lipid A, a phosphorylated glycolipid that anchors the lipopolysaccharide to the outer membrane of the cell. In Nitrosococcus oceani (strain ATCC 19707 / BCRC 17464 / JCM 30415 / NCIMB 11848 / C-107), this protein is UDP-3-O-acylglucosamine N-acyltransferase.